Here is a 323-residue protein sequence, read N- to C-terminus: Dehydrogenase/reductase SDR family member 7B (323 aa).

Over 1–4 the chain is Cytoplasmic; the sequence is MDLT. The helical; Signal-anchor for type II membrane protein transmembrane segment at 5–25 threads the bilayer; the sequence is SWAIFPLLLASIGVYGLYKLL. The Lumenal portion of the chain corresponds to 26-272; that stretch reads QKLRSGAYLQ…AVGERRKELL (247 aa). NAD(+) is bound by residues serine 46 and leucine 48. A substrate-binding site is contributed by serine 178. 3 residues coordinate NAD(+): tyrosine 191, lysine 195, and threonine 226. Catalysis depends on tyrosine 191, which acts as the Proton acceptor.

It belongs to the short-chain dehydrogenases/reductases (SDR) family.

It is found in the endoplasmic reticulum membrane. In terms of biological role, putative oxidoreductase. This chain is Dehydrogenase/reductase SDR family member 7B (dhrs7b), found in Xenopus laevis (African clawed frog).